We begin with the raw amino-acid sequence, 2588 residues long: uncharacterized protein (2588 aa).

The span at 1 to 11 shows a compositional bias: basic and acidic residues; that stretch reads MSFKNNEKYMD. 9 disordered regions span residues 1–56, 442–598, 774–801, 1303–1357, 1631–1662, 1685–1705, 1820–1856, 2317–2342, and 2415–2437; these read MSFK…NISN, ELES…HFSN, KKEK…NNNI, DSHD…KKKY, QNSN…HHQN, NNNN…KDQP, KLNV…EEND, KKKK…DNIN, and YDNN…NSHT. Residues 42 to 56 are compositionally biased toward low complexity; it reads NNNNNNNNNNSNISN. A coiled-coil region spans residues 413-452; the sequence is YREIEENEKVMEMQRRENELLEEKKRLKQELESYHDDSST. The span at 451–462 shows a compositional bias: acidic residues; the sequence is STDDDSSADEQQ. Basic and acidic residues-rich tracts occupy residues 463–515 and 522–588; these read DERR…KNDD and DHTH…DHTH. Residues 785–801 are compositionally biased toward low complexity; sequence DNNNNNNNNNNNDNNNI. Over residues 1308–1318 the composition is skewed to acidic residues; the sequence is NNDDSVNDSND. Over residues 1319–1331 the composition is skewed to low complexity; it reads DTNNVNVNVNVND. Residues 1347-1356 are compositionally biased toward basic residues; that stretch reads DKKKKHKKKK. Polar residues predominate over residues 1631–1643; it reads QNSNNKSNDSLKM. Positions 1685–1698 are enriched in low complexity; the sequence is NNNNNNNNNNNNND. A compositionally biased stretch (basic and acidic residues) spans 1828 to 1838; sequence QGERQDERNID. A compositionally biased stretch (acidic residues) spans 1839 to 1856; sequence HEDEPVSSNTEDDHEEND. Residues 2416–2434 are compositionally biased toward low complexity; it reads DNNNNNDNNNDNNNDNNNN.

This is an uncharacterized protein from Plasmodium falciparum (isolate 3D7).